The chain runs to 88 residues: UPF0297 protein BPUM_2379 (88 aa).

This sequence belongs to the UPF0297 family.

The sequence is that of UPF0297 protein BPUM_2379 from Bacillus pumilus (strain SAFR-032).